The chain runs to 126 residues: Aspartate 1-decarboxylase (126 aa).

S25 serves as the catalytic Schiff-base intermediate with substrate; via pyruvic acid. S25 bears the Pyruvic acid (Ser) mark. A substrate-binding site is contributed by T57. Y58 (proton donor) is an active-site residue. 73–75 (GAA) contacts substrate.

The protein belongs to the PanD family. As to quaternary structure, heterooctamer of four alpha and four beta subunits. Pyruvate serves as cofactor. Post-translationally, is synthesized initially as an inactive proenzyme, which is activated by self-cleavage at a specific serine bond to produce a beta-subunit with a hydroxyl group at its C-terminus and an alpha-subunit with a pyruvoyl group at its N-terminus.

It is found in the cytoplasm. It catalyses the reaction L-aspartate + H(+) = beta-alanine + CO2. It participates in cofactor biosynthesis; (R)-pantothenate biosynthesis; beta-alanine from L-aspartate: step 1/1. Functionally, catalyzes the pyruvoyl-dependent decarboxylation of aspartate to produce beta-alanine. In Erwinia tasmaniensis (strain DSM 17950 / CFBP 7177 / CIP 109463 / NCPPB 4357 / Et1/99), this protein is Aspartate 1-decarboxylase.